Consider the following 197-residue polypeptide: MALKDLFNNFFVVEEEEEVEGPEERESSRSRERVQEREDYNRNENQATPQTFNNKQQAIKSVPQKNTLRSNTTSEERNYRMNNNSKNNSRNVVTMNQASQSYTAQESSKMCLFEPRVFSDTQDIADELKNRRATLVNLQRIDQVSAKRIIDFLSGTVYAIGGDIQRVGTDIFLCTPDNVEVAGSITDHIENMEQHYE.

Positions 15–89 (EEEEVEGPEE…RMNNNSKNNS (75 aa)) are disordered. The span at 22–42 (PEERESSRSRERVQEREDYNR) shows a compositional bias: basic and acidic residues. Residues 43–73 (NENQATPQTFNNKQQAIKSVPQKNTLRSNTT) are compositionally biased toward polar residues. Low complexity predominate over residues 80–89 (RMNNNSKNNS).

The protein belongs to the SepF family. As to quaternary structure, homodimer. Interacts with FtsZ.

The protein resides in the cytoplasm. In terms of biological role, cell division protein that is part of the divisome complex and is recruited early to the Z-ring. Probably stimulates Z-ring formation, perhaps through the cross-linking of FtsZ protofilaments. Its function overlaps with FtsA. This Staphylococcus epidermidis (strain ATCC 35984 / DSM 28319 / BCRC 17069 / CCUG 31568 / BM 3577 / RP62A) protein is Cell division protein SepF.